We begin with the raw amino-acid sequence, 371 residues long: Cytochrome b (371 aa).

The next 4 helical transmembrane spans lie at 25 to 45, 69 to 90, 105 to 125, and 170 to 190; these read FGSMLLTCLALQVLTGFFLAI, WMMQNLHAIGASMFFICIYIHI, WMSGITLLITLMATAFFGYVL, and FFALHFILPFAIISLSSLHII. Residues H75 and H89 each coordinate heme b. Positions 174 and 188 each coordinate heme b. H193 contacts a ubiquinone. Transmembrane regions (helical) follow at residues 218–238, 280–300, 312–332, and 339–358; these read HKDLLLLTFMILLLFTIVSFL, LGGALALVMSIMILFIIPFTH, LSQLMFWTLVSTFATITWAAT, and FIIISQTTSMLYFTFFLSTP.

It belongs to the cytochrome b family. In terms of assembly, the cytochrome bc1 complex contains 3 respiratory subunits (MT-CYB, CYC1 and UQCRFS1), 2 core proteins (UQCRC1 and UQCRC2) and probably 6 low-molecular weight proteins. It depends on heme b as a cofactor.

The protein localises to the mitochondrion inner membrane. Functionally, component of the ubiquinol-cytochrome c reductase complex (complex III or cytochrome b-c1 complex) that is part of the mitochondrial respiratory chain. The b-c1 complex mediates electron transfer from ubiquinol to cytochrome c. Contributes to the generation of a proton gradient across the mitochondrial membrane that is then used for ATP synthesis. This is Cytochrome b (MT-CYB) from Antaresia maculosa (Eastern small blotched python).